Reading from the N-terminus, the 1592-residue chain is MRAPVLAVLAVLLLGTVRAAMDECYEEGSPQRCMPEFVNAAFNATVVATNTCGTPPEEYCVQTGVTGVTKSCHICDSGQFHLQHGAEYLTDYNNQAEITWWQSQTMLAGIQYPSTINLTLHLGKAFDITYVRLKFHTSRPESFALYKRTHEDGPWIPYQYYSGSCEKTYQKFNRGFIRTGEDEQQALCTDEFSDISPLTGGNVAFSTLEGRPSAYNFDNSPVLQEWVTATDIRVTLNRLNTFGDEVFSDPKVLKSYYYAISDFAVGGRCKCNGHASECVRNEFEKIVCNCKHNTFGSDCEKCLPFYNDRPWRRSTADSPNECLPCNCNGRSQECYFDPELYRSTGHGGHCTGCADNTDGPNCERCRENYYRQDNNEPCHACQCNPVGSLSTQCDNYGRCSCKPGVMGEKCDRCQPGFHSLTEAGCRPCACNPAGSTDECNVETGRCSCKDNVEGFNCERCKPGFFHLDEANPRGCTPCFCYGHSSVCSSAEGYRVSSIVSTFESGVEGWTAQQRDGSEYSLSWVSDSSAVSVISESYFPIYFIAPAKFLGNQGASYGQNLTFSFRVERRDTRLSAEDLVLEGAGLRVSVPLIAQGNSYPSETTQRYIFRMHEATDYPWRPSVSPFEFQKMLQNLTAIKIRGSYSERSAGFLEEVSLVTAVAGAGPSAPWVEICSCPTGYIGQFCERCAPGYRRENPSQGPYSPCVLCTCNGHSDTCDPESGVCDCQHNTAGPHCERCSEGYYGDSTTGSASDCQPCPCPGGSSCAVVPRTKEVVCTNCPLGTTGKRCELCDDGYFGDPLGENGAPRPCRICECSNNIDPNAVGNCDRLTGECLKCIYNTGGFYCDRCRDGFYGNPLAQNPDLKCRACSCNPYGTVKGQSGCNQVTGQCECLPHVTERDCSACEPGFYNLLSGRGCERCDCHSLGSTSGQCDVRTGQCECHPGISGQQCQQCEPNHFGFGPEGCKPCDCDPEGSGSLQCKEDGRCECKSGFVGTRCDQCEENYFYNRSGPGCQECPACYRLVKDKVNEQRGKLQELEDLLKNLSTGEENITDQAFEERLREAEKAVNDLLLDAQSSKDVDQGMLDRLAEINTTLSFQLERLQNIRDMIRDTDKQAQEARDRVENTEFIIDSARVQLEKAKMAIANVSITPPESTGDPNNMTLLAEEARKLAERHMQEARDIEKAAKEANDTANEALRLLQKTLASENQTALDIEELNRKYAQAKDIARELEKQASKVHAEAEEAGNRALQIYANLTSVPSIDTTALQNEADKIQKEAEELDSLIDRKLRDYEDLREDMRGREMEVKNLLDKGKTEQQTADQLLARADAAKAQAEEAAKKGRETLQEANDILNKLRDFDKRVNDNKTAAEAALRKIPMIAQTIAEANNKTRQAESALGNANADARGAKSKAEEAEALANTVQKKAATARAEADNTFKEVTDLDGELQDMLQQLQEAENQLKKKQAEAESDEKMAEMASNATKDAESNANNSKKSVNGVLATIDELLSRLGQLDSVDVGQLTVLEKTLDDAKNQLRDSDLDRKLAELQESSNLQRVALDSYSRDIDQILRDIANLEDIKNTLPAGCYNTPIIEKP.

The N-terminal stretch at 1 to 19 is a signal peptide; that stretch reads MRAPVLAVLAVLLLGTVRA. Positions 29–268 constitute a Laminin N-terminal domain; sequence SPQRCMPEFV…AISDFAVGGR (240 aa). Asparagine 43 and asparagine 117 each carry an N-linked (GlcNAc...) asparagine glycan. Disulfide bonds link cysteine 269–cysteine 278, cysteine 271–cysteine 288, cysteine 290–cysteine 299, cysteine 302–cysteine 322, cysteine 325–cysteine 334, cysteine 327–cysteine 350, cysteine 353–cysteine 362, cysteine 365–cysteine 378, cysteine 381–cysteine 393, cysteine 383–cysteine 399, cysteine 401–cysteine 410, cysteine 413–cysteine 425, cysteine 428–cysteine 439, cysteine 430–cysteine 446, cysteine 448–cysteine 457, and cysteine 460–cysteine 475. Laminin EGF-like domains are found at residues 269 to 324, 325 to 380, 381 to 427, and 428 to 477; these read CKCN…ECLP, CNCN…PCHA, CQCN…GCRP, and CACN…GCTP. In terms of domain architecture, Laminin IV type A spans 504–672; that stretch reads SGVEGWTAQQ…AGPSAPWVEI (169 aa). Asparagine 559 and asparagine 633 each carry an N-linked (GlcNAc...) asparagine glycan. 24 cysteine pairs are disulfide-bonded: cysteine 707–cysteine 716, cysteine 709–cysteine 723, cysteine 725–cysteine 734, cysteine 737–cysteine 753, cysteine 756–cysteine 764, cysteine 758–cysteine 775, cysteine 778–cysteine 787, cysteine 790–cysteine 808, cysteine 811–cysteine 825, cysteine 813–cysteine 832, cysteine 835–cysteine 844, cysteine 847–cysteine 864, cysteine 867–cysteine 881, cysteine 869–cysteine 888, cysteine 890–cysteine 899, cysteine 902–cysteine 915, cysteine 918–cysteine 930, cysteine 920–cysteine 937, cysteine 939–cysteine 948, cysteine 951–cysteine 963, cysteine 966–cysteine 978, cysteine 968–cysteine 984, cysteine 986–cysteine 995, and cysteine 998–cysteine 1011. Laminin EGF-like domains are found at residues 707–755, 756–810, 811–866, 867–917, 918–965, and 966–1013; these read CTCN…DCQP, CPCP…PCRI, CECS…KCRA, CSCN…GCER, CDCH…GCKP, and CDCD…GCQE. Asparagine 1005, asparagine 1041, asparagine 1048, asparagine 1090, asparagine 1144, asparagine 1158, asparagine 1188, asparagine 1206, asparagine 1253, asparagine 1363, and asparagine 1386 each carry an N-linked (GlcNAc...) asparagine glycan. Residues 1013–1592 are domain II and I; that stretch reads ECPACYRLVK…CYNTPIIEKP (580 aa). A coiled-coil region spans residues 1018–1477; it reads YRLVKDKVNE…DEKMAEMASN (460 aa). Positions 1456-1472 are enriched in basic and acidic residues; it reads NQLKKKQAEAESDEKMA. The disordered stretch occupies residues 1456–1489; it reads NQLKKKQAEAESDEKMAEMASNATKDAESNANNS. Residues 1476–1489 are compositionally biased toward polar residues; the sequence is SNATKDAESNANNS. N-linked (GlcNAc...) asparagine glycans are attached at residues asparagine 1477 and asparagine 1487. Residues 1515–1579 adopt a coiled-coil conformation; the sequence is VGQLTVLEKT…ANLEDIKNTL (65 aa).

In terms of assembly, laminin is a complex glycoprotein, consisting of three different polypeptide chains (alpha, beta, gamma), which are bound to each other by disulfide bonds into a cross-shaped molecule comprising one long and three short arms with globules at each end.

The protein resides in the secreted. It is found in the extracellular space. Its subcellular location is the extracellular matrix. The protein localises to the basement membrane. Its function is as follows. Binding to cells via a high affinity receptor, laminin is thought to mediate the attachment, migration and organization of cells into tissues during embryonic development by interacting with other extracellular matrix components. The polypeptide is Laminin subunit gamma-1 (lamc1) (Xenopus tropicalis (Western clawed frog)).